A 136-amino-acid chain; its full sequence is Aspartate 1-decarboxylase (136 aa).

The active-site Schiff-base intermediate with substrate; via pyruvic acid is S25. S25 bears the Pyruvic acid (Ser) mark. T57 is a substrate binding site. Y58 acts as the Proton donor in catalysis. Residue 73-75 (GAA) participates in substrate binding. Positions 117–136 (IFQLGEETTPEEAPSLEQRN) are disordered.

Belongs to the PanD family. In terms of assembly, heterooctamer of four alpha and four beta subunits. It depends on pyruvate as a cofactor. Post-translationally, is synthesized initially as an inactive proenzyme, which is activated by self-cleavage at a specific serine bond to produce a beta-subunit with a hydroxyl group at its C-terminus and an alpha-subunit with a pyruvoyl group at its N-terminus.

It localises to the cytoplasm. The catalysed reaction is L-aspartate + H(+) = beta-alanine + CO2. Its pathway is cofactor biosynthesis; (R)-pantothenate biosynthesis; beta-alanine from L-aspartate: step 1/1. Catalyzes the pyruvoyl-dependent decarboxylation of aspartate to produce beta-alanine. The protein is Aspartate 1-decarboxylase of Chloroherpeton thalassium (strain ATCC 35110 / GB-78).